A 1067-amino-acid polypeptide reads, in one-letter code: Isoleucine--tRNA ligase (1067 aa).

Residues 49-59 (PYVSGAIHLGT) carry the 'HIGH' region motif. Positions 625–629 (KMSKS) match the 'KMSKS' region motif. Lys628 provides a ligand contact to ATP.

It belongs to the class-I aminoacyl-tRNA synthetase family. IleS type 2 subfamily. In terms of assembly, monomer. Zn(2+) is required as a cofactor.

Its subcellular location is the cytoplasm. The enzyme catalyses tRNA(Ile) + L-isoleucine + ATP = L-isoleucyl-tRNA(Ile) + AMP + diphosphate. Functionally, catalyzes the attachment of isoleucine to tRNA(Ile). As IleRS can inadvertently accommodate and process structurally similar amino acids such as valine, to avoid such errors it has two additional distinct tRNA(Ile)-dependent editing activities. One activity is designated as 'pretransfer' editing and involves the hydrolysis of activated Val-AMP. The other activity is designated 'posttransfer' editing and involves deacylation of mischarged Val-tRNA(Ile). In Pyrococcus abyssi (strain GE5 / Orsay), this protein is Isoleucine--tRNA ligase.